The chain runs to 431 residues: Enolase (431 aa).

Residue Gln-163 participates in (2R)-2-phosphoglycerate binding. Glu-205 (proton donor) is an active-site residue. Residues Asp-242, Glu-288, and Asp-315 each coordinate Mg(2+). Residues Lys-340, Arg-369, Ser-370, and Lys-391 each contribute to the (2R)-2-phosphoglycerate site. Lys-340 functions as the Proton acceptor in the catalytic mechanism.

The protein belongs to the enolase family. It depends on Mg(2+) as a cofactor.

The protein resides in the cytoplasm. It is found in the secreted. Its subcellular location is the cell surface. It carries out the reaction (2R)-2-phosphoglycerate = phosphoenolpyruvate + H2O. The protein operates within carbohydrate degradation; glycolysis; pyruvate from D-glyceraldehyde 3-phosphate: step 4/5. Its function is as follows. Catalyzes the reversible conversion of 2-phosphoglycerate (2-PG) into phosphoenolpyruvate (PEP). It is essential for the degradation of carbohydrates via glycolysis. This chain is Enolase, found in Bacillus mycoides (strain KBAB4) (Bacillus weihenstephanensis).